The sequence spans 386 residues: Lycopene beta-cyclase (386 aa).

Aspartate 3–glutamate 33 is an NAD(+) binding site.

Belongs to the lycopene cyclase family. FAD is required as a cofactor.

It catalyses the reaction a carotenoid psi-end group = a carotenoid beta-end derivative. It carries out the reaction all-trans-lycopene = gamma-carotene. The enzyme catalyses gamma-carotene = all-trans-beta-carotene. Its pathway is carotenoid biosynthesis; beta-carotene biosynthesis. Its function is as follows. Catalyzes the double cyclization reaction which converts lycopene to beta-carotene. The polypeptide is Lycopene beta-cyclase (Pseudescherichia vulneris (Escherichia vulneris)).